Reading from the N-terminus, the 271-residue chain is Dioscorin dioA3 (271 aa).

The N-terminal stretch at methionine 1 to serine 21 is a signal peptide. Residues aspartate 28–glutamate 262 form the Alpha-carbonic anhydrase domain. The cysteines at positions 53 and 212 are disulfide-linked. Catalysis depends on histidine 94, which acts as the Proton acceptor. Residues aspartate 95, histidine 120–histidine 122, glutamine 139, and threonine 208–alanine 209 contribute to the L-ascorbate site.

Belongs to the alpha-carbonic anhydrase family. Monomer. Homodimer. Not glycosylated. As to expression, expressed in tuber (at protein level).

The catalysed reaction is hydrogencarbonate + H(+) = CO2 + H2O. It carries out the reaction 2 monodehydro-L-ascorbate radical + NADH + H(+) = 2 L-ascorbate + NAD(+). With respect to regulation, the carbonate dehydratase activity is not substantially changed by the addition of Zn(2+). Its function is as follows. Storage protein of tuber. Involved in protection against oxidative stress. Has carbonate dehydratase, trypsin inhibitor, dehydroascorbate (DHA) reductase and monodehydroascorbate (MDA) reductase activities. Catalyzes the reactions of carbonate dehydratase and DHA reductase independently of zinc and glutathione (GSH). The coupled reaction is capable of recycling a plant antioxidant ascorbate using ubiquitous compounds H(2)O and CO(2). Exhibits antioxidant activity. Able to scavenge 1,1-diphenyl-2-picrylhydrazyl (DPPH) radical. Exhibits immunomodulatory activity. Activates Toll-like receptor 4 signaling pathways by up-regulating the gene expression of pro-inflammatory cytokines, such as tumor necrosis factor alpha, interleukin-1 beta and interleukin-6, and chemokines RANTES and MCP-1, in mouse RAW 264.7 macrophages. Stimulates the phagocytosis of E.coli by the LPS-treated mouse macrophages. The polypeptide is Dioscorin dioA3 (Dioscorea japonica (Japanese yam)).